The sequence spans 314 residues: tRNA dimethylallyltransferase (314 aa).

40–47 (GPTASGKS) contributes to the ATP binding site. 42 to 47 (TASGKS) lines the substrate pocket.

Belongs to the IPP transferase family. Monomer. The cofactor is Mg(2+).

The catalysed reaction is adenosine(37) in tRNA + dimethylallyl diphosphate = N(6)-dimethylallyladenosine(37) in tRNA + diphosphate. Catalyzes the transfer of a dimethylallyl group onto the adenine at position 37 in tRNAs that read codons beginning with uridine, leading to the formation of N6-(dimethylallyl)adenosine (i(6)A). The sequence is that of tRNA dimethylallyltransferase from Cereibacter sphaeroides (strain KD131 / KCTC 12085) (Rhodobacter sphaeroides).